A 365-amino-acid polypeptide reads, in one-letter code: 3,4-dihydroxy-2-butanone 4-phosphate synthase (365 aa).

A DHBP synthase region spans residues 1 to 201; it reads MALNTIDELI…IADLIHYRLI (201 aa). Residues 27–28, D32, 140–144, and E164 each bind D-ribulose 5-phosphate; these read RE and RAGHT. E28 contacts Mg(2+). A Mg(2+)-binding site is contributed by H143. The tract at residues 202–365 is GTP cyclohydrolase II-like; the sequence is HERTVERIAE…LEVVEYLPAE (164 aa).

The protein in the N-terminal section; belongs to the DHBP synthase family. This sequence in the C-terminal section; belongs to the GTP cyclohydrolase II family. Mg(2+) serves as cofactor. The cofactor is Mn(2+).

It catalyses the reaction D-ribulose 5-phosphate = (2S)-2-hydroxy-3-oxobutyl phosphate + formate + H(+). It functions in the pathway cofactor biosynthesis; riboflavin biosynthesis; 2-hydroxy-3-oxobutyl phosphate from D-ribulose 5-phosphate: step 1/1. Catalyzes the conversion of D-ribulose 5-phosphate to formate and 3,4-dihydroxy-2-butanone 4-phosphate. This Pseudomonas aeruginosa (strain ATCC 15692 / DSM 22644 / CIP 104116 / JCM 14847 / LMG 12228 / 1C / PRS 101 / PAO1) protein is 3,4-dihydroxy-2-butanone 4-phosphate synthase (ribB).